A 273-amino-acid polypeptide reads, in one-letter code: HMP-PP phosphatase (273 aa).

Residue aspartate 8 is the Nucleophile of the active site. Residues aspartate 8, aspartate 10, and aspartate 212 each contribute to the Mg(2+) site.

It belongs to the HAD-like hydrolase superfamily. Cof family. Requires Mg(2+) as cofactor.

The catalysed reaction is 4-amino-2-methyl-5-(diphosphooxymethyl)pyrimidine + H2O = 4-amino-2-methyl-5-(phosphooxymethyl)pyrimidine + phosphate + H(+). Its function is as follows. Catalyzes the hydrolysis of 4-amino-2-methyl-5-hydroxymethylpyrimidine pyrophosphate (HMP-PP) to 4-amino-2-methyl-5-hydroxymethylpyrimidine phosphate (HMP-P). This Yersinia pseudotuberculosis serotype IB (strain PB1/+) protein is HMP-PP phosphatase.